Reading from the N-terminus, the 111-residue chain is Ribonuclease P protein component (111 aa).

It belongs to the RnpA family. As to quaternary structure, consists of a catalytic RNA component (M1 or rnpB) and a protein subunit.

The enzyme catalyses Endonucleolytic cleavage of RNA, removing 5'-extranucleotides from tRNA precursor.. RNaseP catalyzes the removal of the 5'-leader sequence from pre-tRNA to produce the mature 5'-terminus. It can also cleave other RNA substrates such as 4.5S RNA. The protein component plays an auxiliary but essential role in vivo by binding to the 5'-leader sequence and broadening the substrate specificity of the ribozyme. This Alkaliphilus metalliredigens (strain QYMF) protein is Ribonuclease P protein component.